Consider the following 245-residue polypeptide: rRNA adenine N-6-methyltransferase (245 aa).

Asn10, Leu12, Gly37, Glu58, Asp83, and Ser100 together coordinate S-adenosyl-L-methionine.

The protein belongs to the class I-like SAM-binding methyltransferase superfamily. rRNA adenine N(6)-methyltransferase family.

It catalyses the reaction adenosine(2085) in 23S rRNA + 2 S-adenosyl-L-methionine = N(6)-dimethyladenosine(2085) in 23S rRNA + 2 S-adenosyl-L-homocysteine + 2 H(+). This protein produces a dimethylation of the adenine residue at position 2085 in 23S rRNA, resulting in reduced affinity between ribosomes and macrolide-lincosamide-streptogramin B antibiotics. This chain is rRNA adenine N-6-methyltransferase (ermBP), found in Clostridium perfringens.